We begin with the raw amino-acid sequence, 402 residues long: Zinc finger protein 322 (402 aa).

A C2H2-type 1; atypical zinc finger spans residues 43–65 (YQCLECKQNFCENLALIMCERTH). C2H2-type zinc fingers lie at residues 71 to 93 (YKCDMCEKTFVQSSDLISHQRIH), 99 to 121 (YKCSKCEKSFWHHLALSGHQRTH), 127 to 149 (YTCDICGKNFGQSSDLLVHQRSH), 155 to 177 (YLCSECDKCFSRSTNLIRHRRTH), 183 to 205 (FKCLECEKAFSGKSDLISHQRTH), 211 to 233 (YKCNKCEKSYRHRSAFIVHKRVH), 239 to 261 (YKCGACEKCFGQKSDLIVHQRVH), and 267 to 289 (YKCLECMRSFTRSANLIRHQATH). A C2H2-type 10; degenerate zinc finger spans residues 293-315 (FKCLEYEKSFNCSSDLIVHQRIH). A C2H2-type 11; degenerate zinc finger spans residues 351–373 (YKYTVCDKSFHQSSALLQHQTVH). The residue at position 391 (serine 391) is a Phosphoserine.

It belongs to the krueppel C2H2-type zinc-finger protein family. As to quaternary structure, interacts with POU5F1.

It localises to the cytoplasm. The protein resides in the nucleus. Functionally, transcriptional activator. Important for maintenance of pluripotency in embryonic stem cells. Binds directly to the POU5F1 distal enhancer and the NANOG proximal promoter, and enhances expression of both genes. Can also bind to numerous other gene promoters and regulates expression of many other pluripotency factors, either directly or indirectly. Promotes inhibition of MAPK signaling during embryonic stem cell differentiation. This Macaca fascicularis (Crab-eating macaque) protein is Zinc finger protein 322 (ZNF322).